Reading from the N-terminus, the 257-residue chain is Triosephosphate isomerase (257 aa).

Substrate is bound by residues Asn11 and Lys13. His96 acts as the Electrophile in catalysis. Glu170 serves as the catalytic Proton acceptor.

Belongs to the triosephosphate isomerase family. In terms of assembly, homodimer.

It is found in the cytoplasm. It catalyses the reaction D-glyceraldehyde 3-phosphate = dihydroxyacetone phosphate. The catalysed reaction is dihydroxyacetone phosphate = methylglyoxal + phosphate. It functions in the pathway carbohydrate biosynthesis; gluconeogenesis. It participates in carbohydrate degradation; glycolysis; D-glyceraldehyde 3-phosphate from glycerone phosphate: step 1/1. Functionally, triosephosphate isomerase is an extremely efficient metabolic enzyme that catalyzes the interconversion between dihydroxyacetone phosphate (DHAP) and D-glyceraldehyde-3-phosphate (G3P) in glycolysis and gluconeogenesis. Its function is as follows. It is also responsible for the non-negligible production of methylglyoxal a reactive cytotoxic side-product that modifies and can alter proteins, DNA and lipids. The sequence is that of Triosephosphate isomerase from Giardia intestinalis (Giardia lamblia).